The following is a 109-amino-acid chain: Fluoride-specific ion channel FluC 1 (109 aa).

Helical transmembrane passes span 1–21, 29–49, 55–75, and 87–107; these read MVIV…YFFS, LPLG…VFYN, EVYA…STLN, and VFYS…FLGI. Na(+) is bound by residues G66 and T69.

Belongs to the fluoride channel Fluc/FEX (TC 1.A.43) family.

The protein localises to the cell membrane. It catalyses the reaction fluoride(in) = fluoride(out). Na(+) is not transported, but it plays an essential structural role and its presence is essential for fluoride channel function. Its function is as follows. Fluoride-specific ion channel. Important for reducing fluoride concentration in the cell, thus reducing its toxicity. This is Fluoride-specific ion channel FluC 1 from Streptococcus pneumoniae (strain ATCC BAA-255 / R6).